The chain runs to 417 residues: MAEIKNYTLNFGPQHPAAHGVLRLVLELDGEVIQRADPHIGLLHRATEKLAETKTYIQALPYMDRLDYMSMMCNESAYCLAVEKMLGLEVPIRAKYIRVMFAEITRLLNHLLCVGAGALDCGAMTVMLYAFREREDLLDMYEAVSGARMHAAYFRPGGVYRDLPDTMARHQPNKIRSAKSTEKLNRNRDGSLLDFIDDFTQRFPTYLGEYHTLLTDNRIWKQRTVGIGVVTAERALNLGFSGPMLRGSGVAWDLRKKQPYEIYDRLDFDIPVGKTGDCYDRYLVRMEEMKQSNRIIKQCVDWLRVNPGPVITDNHKIAPPNRESMKSNMEELIHHFKLFSEGFSVPEGEAYATIEHPKGEFGIYMVSDGANKPYRMKIRPPAFVHLAALGEMGRGHMIGDAVAIIGSLDIVFGEVDR.

It belongs to the complex I 49 kDa subunit family. In terms of assembly, NDH-1 is composed of 14 different subunits. Subunits NuoB, C, D, E, F, and G constitute the peripheral sector of the complex.

Its subcellular location is the cell inner membrane. The enzyme catalyses a quinone + NADH + 5 H(+)(in) = a quinol + NAD(+) + 4 H(+)(out). NDH-1 shuttles electrons from NADH, via FMN and iron-sulfur (Fe-S) centers, to quinones in the respiratory chain. The immediate electron acceptor for the enzyme in this species is believed to be ubiquinone. Couples the redox reaction to proton translocation (for every two electrons transferred, four hydrogen ions are translocated across the cytoplasmic membrane), and thus conserves the redox energy in a proton gradient. The chain is NADH-quinone oxidoreductase subunit D from Albidiferax ferrireducens (strain ATCC BAA-621 / DSM 15236 / T118) (Rhodoferax ferrireducens).